The chain runs to 238 residues: Aerobic respiration control protein ArcA (238 aa).

The region spanning 5 to 118 (HILIVEDELV…ELTIRARNLL (114 aa)) is the Response regulatory domain. Asp54 is modified (4-aspartylphosphate). The segment at residues 134-234 (VESYKFNGWE…IHGEGYRFCG (101 aa)) is a DNA-binding region (ompR/PhoB-type).

Phosphorylated by ArcB.

The protein localises to the cytoplasm. Member of the two-component regulatory system ArcB/ArcA. Represses a wide variety of aerobic enzymes under anaerobic conditions. It may also be involved in the osmoregulation of envelope proteins. When activated by ArcB, it negatively regulates the expression of genes of aerobic function. Activates the transcription of the plfB operon by binding to its promoter. This chain is Aerobic respiration control protein ArcA (arcA), found in Escherichia coli O157:H7.